Here is a 349-residue protein sequence, read N- to C-terminus: 4-hydroxythreonine-4-phosphate dehydrogenase (349 aa).

Residue T136 coordinates substrate. 3 residues coordinate a divalent metal cation: H171, H216, and H281. 3 residues coordinate substrate: K289, N298, and R307.

Belongs to the PdxA family. Homodimer. Requires a divalent metal cation as cofactor.

It is found in the cytoplasm. It carries out the reaction 4-(phosphooxy)-L-threonine + NAD(+) = 3-amino-2-oxopropyl phosphate + CO2 + NADH. It participates in cofactor biosynthesis; pyridoxine 5'-phosphate biosynthesis; pyridoxine 5'-phosphate from D-erythrose 4-phosphate: step 4/5. Catalyzes the NAD(P)-dependent oxidation of 4-(phosphooxy)-L-threonine (HTP) into 2-amino-3-oxo-4-(phosphooxy)butyric acid which spontaneously decarboxylates to form 3-amino-2-oxopropyl phosphate (AHAP). The chain is 4-hydroxythreonine-4-phosphate dehydrogenase from Synechocystis sp. (strain ATCC 27184 / PCC 6803 / Kazusa).